The sequence spans 44 residues: Defensin heliomicin (44 aa).

3 disulfide bridges follow: Cys7–Cys32, Cys18–Cys40, and Cys22–Cys42.

It is found in the secreted. In terms of biological role, this peptide has potent anti-fungal activity. Has no activity against Gram-negative and Gram-positive bacteria. The polypeptide is Defensin heliomicin (Heliothis virescens (Tobacco budworm moth)).